The sequence spans 387 residues: Probable serine/threonine-protein kinase PBL18 (387 aa).

The tract at residues 1–37 is disordered; the sequence is MGNCLDSSARVGNRESTFGGSSRISRKPNQSSRLSSL. Residue Gly-2 is the site of N-myristoyl glycine attachment. The S-palmitoyl cysteine moiety is linked to residue Cys-4. Residues 14 to 37 show a composition bias toward polar residues; sequence RESTFGGSSRISRKPNQSSRLSSL. A Phosphothreonine modification is found at Thr-73. The Protein kinase domain occupies 84–365; that stretch reads FKPNSMIGEG…ADVLSTLQQL (282 aa). ATP is bound by residues 90-98 and Lys-122; that span reads IGEGGFGCV. Position 167 is a phosphotyrosine (Tyr-167). Asp-215 acts as the Proton acceptor in catalysis. Ser-219 carries the phosphoserine modification. Phosphothreonine occurs at positions 250 and 255. Phosphotyrosine is present on Tyr-263. Residues 368-387 form a disordered region; sequence SSKKMGSTQNIVMSPSSHMS.

This sequence belongs to the protein kinase superfamily. Ser/Thr protein kinase family.

The protein resides in the cell membrane. It catalyses the reaction L-seryl-[protein] + ATP = O-phospho-L-seryl-[protein] + ADP + H(+). The enzyme catalyses L-threonyl-[protein] + ATP = O-phospho-L-threonyl-[protein] + ADP + H(+). Its function is as follows. May be involved in plant defense signaling. This chain is Probable serine/threonine-protein kinase PBL18, found in Arabidopsis thaliana (Mouse-ear cress).